The primary structure comprises 951 residues: Valine--tRNA ligase (951 aa).

A 'HIGH' region motif is present at residues Pro42–His52. A 'KMSKS' region motif is present at residues Lys554 to Ser558. Lys557 contacts ATP. A coiled-coil region spans residues Ala880–Gln944.

This sequence belongs to the class-I aminoacyl-tRNA synthetase family. ValS type 1 subfamily. As to quaternary structure, monomer.

It is found in the cytoplasm. The catalysed reaction is tRNA(Val) + L-valine + ATP = L-valyl-tRNA(Val) + AMP + diphosphate. In terms of biological role, catalyzes the attachment of valine to tRNA(Val). As ValRS can inadvertently accommodate and process structurally similar amino acids such as threonine, to avoid such errors, it has a 'posttransfer' editing activity that hydrolyzes mischarged Thr-tRNA(Val) in a tRNA-dependent manner. The chain is Valine--tRNA ligase from Escherichia coli O6:H1 (strain CFT073 / ATCC 700928 / UPEC).